The primary structure comprises 117 residues: Large ribosomal subunit protein uL18 (117 aa).

Belongs to the universal ribosomal protein uL18 family. As to quaternary structure, part of the 50S ribosomal subunit; part of the 5S rRNA/L5/L18/L25 subcomplex. Contacts the 5S and 23S rRNAs.

Functionally, this is one of the proteins that bind and probably mediate the attachment of the 5S RNA into the large ribosomal subunit, where it forms part of the central protuberance. In Francisella philomiragia subsp. philomiragia (strain ATCC 25017 / CCUG 19701 / FSC 153 / O#319-036), this protein is Large ribosomal subunit protein uL18.